The sequence spans 154 residues: 6,7-dimethyl-8-ribityllumazine synthase (154 aa).

Residues phenylalanine 22, 56-58, and 80-82 each bind 5-amino-6-(D-ribitylamino)uracil; these read AFE and AVI. 85 to 86 lines the (2S)-2-hydroxy-3-oxobutyl phosphate pocket; that stretch reads AT. Histidine 88 functions as the Proton donor in the catalytic mechanism. Position 113 (phenylalanine 113) interacts with 5-amino-6-(D-ribitylamino)uracil. Arginine 127 provides a ligand contact to (2S)-2-hydroxy-3-oxobutyl phosphate.

The protein belongs to the DMRL synthase family. As to quaternary structure, forms an icosahedral capsid composed of 60 subunits, arranged as a dodecamer of pentamers.

It catalyses the reaction (2S)-2-hydroxy-3-oxobutyl phosphate + 5-amino-6-(D-ribitylamino)uracil = 6,7-dimethyl-8-(1-D-ribityl)lumazine + phosphate + 2 H2O + H(+). It functions in the pathway cofactor biosynthesis; riboflavin biosynthesis; riboflavin from 2-hydroxy-3-oxobutyl phosphate and 5-amino-6-(D-ribitylamino)uracil: step 1/2. Its function is as follows. Catalyzes the formation of 6,7-dimethyl-8-ribityllumazine by condensation of 5-amino-6-(D-ribitylamino)uracil with 3,4-dihydroxy-2-butanone 4-phosphate. This is the penultimate step in the biosynthesis of riboflavin. The sequence is that of 6,7-dimethyl-8-ribityllumazine synthase from Anoxybacillus flavithermus (strain DSM 21510 / WK1).